The chain runs to 354 residues: Dual-specificity RNA methyltransferase RlmN (354 aa).

Glu-86 acts as the Proton acceptor in catalysis. The 234-residue stretch at Arg-105–Asp-338 folds into the Radical SAM core domain. Cys-112 and Cys-343 are oxidised to a cystine. Residues Cys-119, Cys-123, and Cys-126 each contribute to the [4Fe-4S] cluster site. Residues Gly-169–Glu-170, Ser-201, Ser-224–His-226, and Asn-300 each bind S-adenosyl-L-methionine. Residue Cys-343 is the S-methylcysteine intermediate of the active site.

The protein belongs to the radical SAM superfamily. RlmN family. Requires [4Fe-4S] cluster as cofactor.

It localises to the cytoplasm. The enzyme catalyses adenosine(2503) in 23S rRNA + 2 reduced [2Fe-2S]-[ferredoxin] + 2 S-adenosyl-L-methionine = 2-methyladenosine(2503) in 23S rRNA + 5'-deoxyadenosine + L-methionine + 2 oxidized [2Fe-2S]-[ferredoxin] + S-adenosyl-L-homocysteine. The catalysed reaction is adenosine(37) in tRNA + 2 reduced [2Fe-2S]-[ferredoxin] + 2 S-adenosyl-L-methionine = 2-methyladenosine(37) in tRNA + 5'-deoxyadenosine + L-methionine + 2 oxidized [2Fe-2S]-[ferredoxin] + S-adenosyl-L-homocysteine. Functionally, specifically methylates position 2 of adenine 2503 in 23S rRNA and position 2 of adenine 37 in tRNAs. m2A2503 modification seems to play a crucial role in the proofreading step occurring at the peptidyl transferase center and thus would serve to optimize ribosomal fidelity. The protein is Dual-specificity RNA methyltransferase RlmN of Campylobacter fetus subsp. fetus (strain 82-40).